Consider the following 2157-residue polypeptide: DExH-box ATP-dependent RNA helicase DExH14 (2157 aa).

Residues 374-394 (KAASNTQSRMPTYGTQVTVQT) form a disordered region. Positions 375–394 (AASNTQSRMPTYGTQVTVQT) are enriched in polar residues. The Helicase ATP-binding 1 domain maps to 517-699 (QTVYHTNENI…FLRVNTDTGL (183 aa)). 530–537 (APTGAGKT) serves as a coordination point for ATP. A DEVH box motif is present at residues 641-644 (DEVH). In terms of domain architecture, Helicase C-terminal 1 spans 734–932 (CYKKVVDSIK…SLKDNLNAEV (199 aa)). Positions 1008–1315 (CTELGRVASH…LHAETYFTIS (308 aa)) constitute an SEC63 1 domain. Positions 1365-1540 (HVLYHTDNNV…WLGVGEIGLF (176 aa)) constitute a Helicase ATP-binding 2 domain. 1378–1385 (APTGSGKT) serves as a coordination point for ATP. Positions 1482 to 1485 (DEIH) match the DEIH box motif. The Helicase C-terminal 2 domain occupies 1571–1780 (NKPAYAAICT…GTIGNKEDAV (210 aa)). An SEC63 2 domain is found at 1839–2150 (PTMLGTIASQ…YLGFEQEHSI (312 aa)).

Belongs to the DExH box helicase family.

It localises to the nucleus. The catalysed reaction is ATP + H2O = ADP + phosphate + H(+). In terms of biological role, RNA helicase that plays an essential role in pre-mRNA splicing as component of the U5 snRNP and U4/U6-U5 tri-snRNP complexes. Involved in spliceosome assembly, activation and disassembly. This Arabidopsis thaliana (Mouse-ear cress) protein is DExH-box ATP-dependent RNA helicase DExH14.